The primary structure comprises 422 residues: Transcription termination factor Rho (422 aa).

In terms of domain architecture, Rho RNA-BD spans 52 to 127; it reads EVGGDGVLEV…TRVTKINFDD (76 aa). Residues 173–178, 185–190, and Arg-216 contribute to the ATP site; these read GKGQRG and RTGKTV.

The protein belongs to the Rho family. As to quaternary structure, homohexamer. The homohexamer assembles into an open ring structure.

Functionally, facilitates transcription termination by a mechanism that involves Rho binding to the nascent RNA, activation of Rho's RNA-dependent ATPase activity, and release of the mRNA from the DNA template. The protein is Transcription termination factor Rho of Cereibacter sphaeroides (strain ATCC 17023 / DSM 158 / JCM 6121 / CCUG 31486 / LMG 2827 / NBRC 12203 / NCIMB 8253 / ATH 2.4.1.) (Rhodobacter sphaeroides).